Reading from the N-terminus, the 524-residue chain is Methyl-CpG-binding domain-containing protein 8 (524 aa).

Low complexity predominate over residues 45–60 (CSSLSPSSSASLAASA). Residues 45–151 (CSSLSPSSSA…EEELEDNEGQ (107 aa)) are disordered. Polar residues predominate over residues 75 to 84 (FNESAGSRKQ). The span at 106–116 (RQRDDSSREEQ) shows a compositional bias: basic and acidic residues. The span at 136–149 (EEEDEGEEELEDNE) shows a compositional bias: acidic residues. Residues 334 to 406 (VVNACDYGGY…QHYYLQSDNK (73 aa)) enclose the MBD domain.

Expressed in shoot meristems, roots (vasculature and tips), hypocotyls (vasculature), cotyledons (vasculature and hydathodes), young leaves, buds, flowers and stems. Detected in stomata.

It is found in the nucleus. Probable transcriptional regulator. May regulates developmental traits such as flowering time. This Arabidopsis thaliana (Mouse-ear cress) protein is Methyl-CpG-binding domain-containing protein 8 (MBD8).